The chain runs to 262 residues: Ribosomal RNA small subunit methyltransferase A (262 aa).

6 residues coordinate S-adenosyl-L-methionine: His16, Leu18, Gly43, Glu64, Asp89, and Asn109.

It belongs to the class I-like SAM-binding methyltransferase superfamily. rRNA adenine N(6)-methyltransferase family. RsmA subfamily.

It localises to the cytoplasm. It carries out the reaction adenosine(1518)/adenosine(1519) in 16S rRNA + 4 S-adenosyl-L-methionine = N(6)-dimethyladenosine(1518)/N(6)-dimethyladenosine(1519) in 16S rRNA + 4 S-adenosyl-L-homocysteine + 4 H(+). Its function is as follows. Specifically dimethylates two adjacent adenosines (A1518 and A1519) in the loop of a conserved hairpin near the 3'-end of 16S rRNA in the 30S particle. May play a critical role in biogenesis of 30S subunits. The chain is Ribosomal RNA small subunit methyltransferase A from Xanthomonas campestris pv. campestris (strain B100).